A 124-amino-acid polypeptide reads, in one-letter code: Small ribosomal subunit protein eS25 (124 aa).

Over residues 1–22 (MPPKDSKQKKDAGKSKKDKDPV) the composition is skewed to basic and acidic residues. A disordered region spans residues 1-37 (MPPKDSKQKKDAGKSKKDKDPVNKSGGKAKKKKWSKG). Residues 27-37 (GKAKKKKWSKG) are compositionally biased toward basic residues.

The protein belongs to the eukaryotic ribosomal protein eS25 family. As to quaternary structure, component of the small ribosomal subunit.

The protein resides in the cytoplasm. In terms of biological role, component of the small ribosomal subunit. The ribosome is a large ribonucleoprotein complex responsible for the synthesis of proteins in the cell. In Danio rerio (Zebrafish), this protein is Small ribosomal subunit protein eS25 (rps25).